The primary structure comprises 313 residues: Competence protein ComGA (313 aa).

Position 138 to 145 (138 to 145 (GPVGSGKT)) interacts with ATP.

The protein belongs to the GSP E family.

Its subcellular location is the cell membrane. Its function is as follows. Required for uptake of DNA by competent cells. May be involved in assembly of a complex forming a transformation pilus at the surface of competent cells. In Streptococcus pneumoniae (strain ATCC BAA-255 / R6), this protein is Competence protein ComGA.